The sequence spans 592 residues: MMTHAGVLGTRFTVWAPNARGVRVCGNFCRWDGAAFPMRSLGSSGVWELFVPGIGEGELYKFEITRPDGTHTVRADPMARRAEVPPATASIVTESSYAWADGAWMAARGERPVHESPFSVYEVHLPSWRPGLTYRQLAEQLPAYVADLGFTHVELLPVAEHPFGGSWGYQVTGFYAPTARLGTPDDFKYLVDALHRAGVGVLMDWVPAHFPRDDWALAEFDGRPLYEPEDPQRAAHPDWGTLEFDYGRKEVRNFLVANAVYWCEEFHIDGLRVDAVASMLYLDYSREEGQWSPNEFGGRDNPDAVAFLQEMNATLYRRVPGVITIAEESTAWDGVTRATHDNGLGFGLKWNMGWMHDSLGYVQHEPVHRKYHHHEMTFSMVYAYSENYVLPISHDEVVHGKQALVSKMPGDWWQRRANHRAYLGFMWAHPGKQLLFMGQEFAQGAEWSPEHGPEWWLLDDEYHSAGDHRGMRDLVRDLNTLYRAEPALWERDTDPSGFAWVVGDAAEDNVFAFLRHAADGTPLLAVSNFSPVVRHDYRLGVPDDIPAWQEALNTDAARYGGSDLICPDPVKPESGEIRLTLPPLATVWLRPA.

Catalysis depends on D274, which acts as the Nucleophile. E327 functions as the Proton donor in the catalytic mechanism.

This sequence belongs to the glycosyl hydrolase 13 family. GlgB subfamily. As to quaternary structure, monomer.

The catalysed reaction is Transfers a segment of a (1-&gt;4)-alpha-D-glucan chain to a primary hydroxy group in a similar glucan chain.. It functions in the pathway glycan biosynthesis; glycogen biosynthesis. Catalyzes the formation of the alpha-1,6-glucosidic linkages in glycogen by scission of a 1,4-alpha-linked oligosaccharide from growing alpha-1,4-glucan chains and the subsequent attachment of the oligosaccharide to the alpha-1,6 position. The chain is 1,4-alpha-glucan branching enzyme GlgB 2 from Streptomyces avermitilis (strain ATCC 31267 / DSM 46492 / JCM 5070 / NBRC 14893 / NCIMB 12804 / NRRL 8165 / MA-4680).